A 958-amino-acid chain; its full sequence is Coiled-coil domain-containing protein 33 (958 aa).

In terms of domain architecture, C2 spans 214-353; that stretch reads SPEEPLIASQ…LVKPTESGKA (140 aa). The span at 602 to 617 shows a compositional bias: polar residues; the sequence is SKDTVSSTMDLSTSTP. The interval 602–628 is disordered; that stretch reads SKDTVSSTMDLSTSTPREAEEEPLVPE. 2 coiled-coil regions span residues 632–774 and 859–899; these read DTEM…LEDR and FNLL…RLQE. Positions 899 to 958 are disordered; sequence EQEKGFRHPSNSIIIEQPSALTHSMDLKQPSELEPLLPSSDSKLNKPLSPQKETANSQQT. Composition is skewed to polar residues over residues 907–920 and 949–958; these read PSNSIIIEQPSALT and QKETANSQQT.

In Homo sapiens (Human), this protein is Coiled-coil domain-containing protein 33 (CCDC33).